The primary structure comprises 152 residues: Small ribosomal subunit protein bS6 (152 aa).

Residues 96-152 form a disordered region; it reads HEEGPSAMLQKRDRDDRGERGDRGDRGDRGDRGFGGREDRPRRPRPTEESHGGEEEV.

It belongs to the bacterial ribosomal protein bS6 family.

Binds together with bS18 to 16S ribosomal RNA. In Xanthobacter autotrophicus (strain ATCC BAA-1158 / Py2), this protein is Small ribosomal subunit protein bS6.